A 300-amino-acid polypeptide reads, in one-letter code: Actin-related protein 2/3 complex subunit 2-A (300 aa).

It belongs to the ARPC2 family. Component of the Arp2/3 complex composed of actr2/arp2, actr3/arp3, arpc1 (arpc1a or arpc1b), arpc2, arpc3, arpc4 and arpc5.

The protein resides in the cytoplasm. The protein localises to the cytoskeleton. It localises to the cell projection. Its subcellular location is the nucleus. In terms of biological role, actin-binding component of the Arp2/3 complex, a multiprotein complex that mediates actin polymerization upon stimulation by nucleation-promoting factor (NPF). The Arp2/3 complex mediates the formation of branched actin networks in the cytoplasm, providing the force for cell motility. In addition to its role in the cytoplasmic cytoskeleton, the Arp2/3 complex also promotes actin polymerization in the nucleus, thereby regulating gene transcription and repair of damaged DNA. The Arp2/3 complex promotes homologous recombination (HR) repair in response to DNA damage by promoting nuclear actin polymerization, leading to drive motility of double-strand breaks (DSBs). The sequence is that of Actin-related protein 2/3 complex subunit 2-A (arpc2-a) from Xenopus laevis (African clawed frog).